Here is a 297-residue protein sequence, read N- to C-terminus: Putative S-adenosyl-L-methionine-dependent methyltransferase Mmcs_1044 (297 aa).

S-adenosyl-L-methionine contacts are provided by residues aspartate 124 and 153 to 154 (DL).

It belongs to the UPF0677 family.

In terms of biological role, exhibits S-adenosyl-L-methionine-dependent methyltransferase activity. The sequence is that of Putative S-adenosyl-L-methionine-dependent methyltransferase Mmcs_1044 from Mycobacterium sp. (strain MCS).